Reading from the N-terminus, the 143-residue chain is Protein SLC31A2 (143 aa).

At 1–22 the chain is on the extracellular side; sequence MPMHFIFSDEAVLLFDFWRVHS. The helical transmembrane segment at 23-43 threads the bilayer; sequence PTGMALSVLVVLLLAVLYEGI. Residues 44–93 lie on the Cytoplasmic side of the membrane; it reads KVGKAKLLHKTLESLPATNSQQFILGPDQDSTGSRSTSDNRTRLRWFLCY. Thr-75 carries the phosphothreonine modification. Ser-77 carries the phosphoserine modification. A helical membrane pass occupies residues 94–114; that stretch reads FGQSLVHVIQVVIGYFVMLAV. At 115–119 the chain is on the extracellular side; the sequence is MSYNT. A helical transmembrane segment spans residues 120-140; that stretch reads WIFLGVVLGSAVGYYLAYPLL. Topologically, residues 141–143 are cytoplasmic; the sequence is NMT.

Belongs to the copper transporter (Ctr) (TC 1.A.56) family. SLC31A subfamily. In terms of assembly, oligomer. Interacts with SLC31A1; this interaction stabilizes SLC31A2 and protects it from ubiquitination and the subsequent degradation. In terms of processing, ubiquitinated; ubiquitination and the subsequent proteasomal degradation are prevent by SLC31A1 that stabilizes it.

The protein resides in the membrane. It localises to the cytoplasmic vesicle membrane. It is found in the late endosome membrane. The protein localises to the lysosome membrane. Its subcellular location is the recycling endosome membrane. Its function is as follows. Does not function as a copper(1+) importer in vivo. However, in vitro functions as a low-affinity copper(1+) importer. Regulator of SLC31A1 which facilitates the cleavage of the SLC31A1 ecto-domain or which stabilizes the truncated form of SLC31A1 (Truncated CTR1 form), thereby drives the SLC31A1 truncated form-dependent endosomal copper export and modulates the copper and cisplatin accumulation via SLC31A1. The sequence is that of Protein SLC31A2 from Mus musculus (Mouse).